The chain runs to 1342 residues: DNA-directed RNA polymerase subunit beta (1342 aa).

The protein belongs to the RNA polymerase beta chain family. As to quaternary structure, the RNAP catalytic core consists of 2 alpha, 1 beta, 1 beta' and 1 omega subunit. When a sigma factor is associated with the core the holoenzyme is formed, which can initiate transcription.

The enzyme catalyses RNA(n) + a ribonucleoside 5'-triphosphate = RNA(n+1) + diphosphate. Its function is as follows. DNA-dependent RNA polymerase catalyzes the transcription of DNA into RNA using the four ribonucleoside triphosphates as substrates. The chain is DNA-directed RNA polymerase subunit beta from Pasteurella multocida (strain Pm70).